The chain runs to 168 residues: Group 2 truncated hemoglobin 3-1 (168 aa).

Histidine 98 serves as a coordination point for heme b.

This sequence belongs to the truncated hemoglobin family. Group II subfamily. Homodimer when ferric. Mainly expressed in root nodules, but barely in leaves, roots, stems, flowers and fruits.

Its function is as follows. Hemoglobin-like protein that exhibits an unusual concentration-independent binding of O(2) and CO. Required for general plant development and during nodulation. May promote shoot organogenesis from root explants. In Lotus japonicus (Lotus corniculatus var. japonicus), this protein is Group 2 truncated hemoglobin 3-1.